We begin with the raw amino-acid sequence, 287 residues long: Movement protein BC1 (287 aa).

The protein belongs to the begomovirus movement protein BC1 family. Binds to dimeric supercoiled plasmid DNA. Phosphorylated.

Its subcellular location is the host cell membrane. The protein localises to the host microsome membrane. The protein resides in the host endoplasmic reticulum membrane. Transports viral genome to neighboring plant cells directly through plasmosdesmata, without any budding. The movement protein allows efficient cell to cell propagation, by bypassing the host cell wall barrier. Begomovirus genome is shuttled out of nucleus by Nuclear shuttle protein (NSP) and the movement protein transports the DNA-NSP complex to cell plasmodesmata and facilitates further movement across the cell wall. This chain is Movement protein BC1, found in Manihot esculenta (Cassava).